A 491-amino-acid chain; its full sequence is UDP-N-acetylmuramate--L-alanine ligase (491 aa).

126-132 provides a ligand contact to ATP; that stretch reads GTHGKTT.

This sequence belongs to the MurCDEF family.

The protein localises to the cytoplasm. It carries out the reaction UDP-N-acetyl-alpha-D-muramate + L-alanine + ATP = UDP-N-acetyl-alpha-D-muramoyl-L-alanine + ADP + phosphate + H(+). It participates in cell wall biogenesis; peptidoglycan biosynthesis. In terms of biological role, cell wall formation. This Escherichia coli (strain K12 / MC4100 / BW2952) protein is UDP-N-acetylmuramate--L-alanine ligase.